Here is a 370-residue protein sequence, read N- to C-terminus: 3-dehydroquinate synthase (370 aa).

Residues 112–116 (GVIGD), 136–137 (TT), Lys-149, Lys-158, and 176–179 (TLAT) each bind NAD(+). The Zn(2+) site is built by Glu-191, His-254, and His-276.

The protein belongs to the sugar phosphate cyclases superfamily. Dehydroquinate synthase family. It depends on Co(2+) as a cofactor. Requires Zn(2+) as cofactor. NAD(+) serves as cofactor.

The protein localises to the cytoplasm. The enzyme catalyses 7-phospho-2-dehydro-3-deoxy-D-arabino-heptonate = 3-dehydroquinate + phosphate. The protein operates within metabolic intermediate biosynthesis; chorismate biosynthesis; chorismate from D-erythrose 4-phosphate and phosphoenolpyruvate: step 2/7. In terms of biological role, catalyzes the conversion of 3-deoxy-D-arabino-heptulosonate 7-phosphate (DAHP) to dehydroquinate (DHQ). The polypeptide is 3-dehydroquinate synthase (Xylella fastidiosa (strain M23)).